The chain runs to 316 residues: Adenine deaminase (316 aa).

Positions 14, 16, and 194 each coordinate Zn(2+). The active-site Proton donor is Glu-197. Asp-275 lines the Zn(2+) pocket. Asp-276 is a binding site for substrate.

This sequence belongs to the metallo-dependent hydrolases superfamily. Adenosine and AMP deaminases family. Adenine deaminase type 2 subfamily. Zn(2+) is required as a cofactor.

The enzyme catalyses adenine + H2O + H(+) = hypoxanthine + NH4(+). Functionally, catalyzes the hydrolytic deamination of adenine to hypoxanthine. Plays an important role in the purine salvage pathway and in nitrogen catabolism. In Pseudomonas entomophila (strain L48), this protein is Adenine deaminase.